We begin with the raw amino-acid sequence, 199 residues long: Large ribosomal subunit protein bL25 (199 aa).

It belongs to the bacterial ribosomal protein bL25 family. CTC subfamily. Part of the 50S ribosomal subunit; part of the 5S rRNA/L5/L18/L25 subcomplex. Contacts the 5S rRNA. Binds to the 5S rRNA independently of L5 and L18.

Functionally, this is one of the proteins that binds to the 5S RNA in the ribosome where it forms part of the central protuberance. The polypeptide is Large ribosomal subunit protein bL25 (Rickettsia akari (strain Hartford)).